The chain runs to 54 residues: Lectin alpha chain (54 aa).

Belongs to the leguminous lectin family. In terms of assembly, tetramer of two alpha and two beta chains.

The protein is Lectin alpha chain of Lathyrus tingitanus (Tangier pea).